Reading from the N-terminus, the 233-residue chain is Ribose-5-phosphate isomerase A (233 aa).

Residues 31–34 (SGST), 87–90 (DGAD), and 100–103 (KGGG) contribute to the substrate site. Glu109 serves as the catalytic Proton acceptor. Lys127 is a binding site for substrate.

Belongs to the ribose 5-phosphate isomerase family. Homodimer.

The enzyme catalyses aldehydo-D-ribose 5-phosphate = D-ribulose 5-phosphate. Its pathway is carbohydrate degradation; pentose phosphate pathway; D-ribose 5-phosphate from D-ribulose 5-phosphate (non-oxidative stage): step 1/1. In terms of biological role, catalyzes the reversible conversion of ribose-5-phosphate to ribulose 5-phosphate. In Chlamydia caviae (strain ATCC VR-813 / DSM 19441 / 03DC25 / GPIC) (Chlamydophila caviae), this protein is Ribose-5-phosphate isomerase A.